The sequence spans 160 residues: MSPAAGVPEMPALDASGVRLGIVASTWHSRICDALLAGARKVAADSGVENPTVVRVLGAIEIPVVAQELARNHDAVVALGVVIRGQTPHFEYVCDAVTQGITRVSLDASTPVANGVLTTDNEQQALDRAGLPDSAEDKGAQAAGAALSAALTLRELRARS.

Residues W27, 59 to 61 (AIE), and 81 to 83 (VVI) each bind 5-amino-6-(D-ribitylamino)uracil. Residue 86 to 87 (QT) participates in (2S)-2-hydroxy-3-oxobutyl phosphate binding. H89 functions as the Proton donor in the catalytic mechanism. N114 lines the 5-amino-6-(D-ribitylamino)uracil pocket. R128 lines the (2S)-2-hydroxy-3-oxobutyl phosphate pocket.

Belongs to the DMRL synthase family. As to quaternary structure, homopentamer.

The catalysed reaction is (2S)-2-hydroxy-3-oxobutyl phosphate + 5-amino-6-(D-ribitylamino)uracil = 6,7-dimethyl-8-(1-D-ribityl)lumazine + phosphate + 2 H2O + H(+). It functions in the pathway cofactor biosynthesis; riboflavin biosynthesis; riboflavin from 2-hydroxy-3-oxobutyl phosphate and 5-amino-6-(D-ribitylamino)uracil: step 1/2. Its function is as follows. Catalyzes the formation of 6,7-dimethyl-8-ribityllumazine by condensation of 5-amino-6-(D-ribitylamino)uracil with 3,4-dihydroxy-2-butanone 4-phosphate. This is the penultimate step in the biosynthesis of riboflavin. The polypeptide is 6,7-dimethyl-8-ribityllumazine synthase (Mycobacterium avium (strain 104)).